A 484-amino-acid polypeptide reads, in one-letter code: MEKSWFNLMFSKGELESRGELSKAMDSFAPSEKTTISQDRFIYDMDKNFYGWGERSSYSNNVDLLVSSKDIRNFISDDTFFVRDSNKNSYSIYFDIKKKFFEIDNDFSDLEIFFYNYCSSSYLNNRSKGDNDLHYDPYIKDTKYNCTNHINSCIDSYFRSHICIDSNFLSNSKNSNESYIYNFICSESGKIRESKNYKIRTNRNRSNLISSKDFDITQNYNQLWIQCDNCYGLMYKKVKMNVCEQCGHYLKMSSSERIELSIDPGTWNPMDEDMVSADPIKFHSKEEPYKNRIDSAQKTTGLTDAVQTGTGQLNGIPVALGVMDFQFMGGSMGSVVGEKITRLIEYATNQCLPLILVCSSGGARMQEGSLSLMQMAKISSVLCDYQSSKKLFYISILTSPTTGGVTASFGMLGDIIIAEPYAYIAFAGKRVIEQTLKKAVPDGSQAAESLLRKGLLDAIVPRNLLKGVLRELFQLHAFFPLNKN.

Residues 223–484 form the CoA carboxyltransferase N-terminal domain; the sequence is LWIQCDNCYG…LHAFFPLNKN (262 aa). 4 residues coordinate Zn(2+): Cys227, Cys230, Cys243, and Cys246. The C4-type zinc-finger motif lies at 227–246; sequence CDNCYGLMYKKVKMNVCEQC.

The protein belongs to the AccD/PCCB family. In terms of assembly, acetyl-CoA carboxylase is a heterohexamer composed of biotin carboxyl carrier protein, biotin carboxylase and 2 subunits each of ACCase subunit alpha and ACCase plastid-coded subunit beta (accD). The cofactor is Zn(2+).

The protein localises to the plastid. The protein resides in the chloroplast stroma. The enzyme catalyses N(6)-carboxybiotinyl-L-lysyl-[protein] + acetyl-CoA = N(6)-biotinyl-L-lysyl-[protein] + malonyl-CoA. The protein operates within lipid metabolism; malonyl-CoA biosynthesis; malonyl-CoA from acetyl-CoA: step 1/1. Functionally, component of the acetyl coenzyme A carboxylase (ACC) complex. Biotin carboxylase (BC) catalyzes the carboxylation of biotin on its carrier protein (BCCP) and then the CO(2) group is transferred by the transcarboxylase to acetyl-CoA to form malonyl-CoA. This Crucihimalaya wallichii (Rock-cress) protein is Acetyl-coenzyme A carboxylase carboxyl transferase subunit beta, chloroplastic.